Consider the following 282-residue polypeptide: tRNA pseudouridine synthase B (282 aa).

Asp36 acts as the Nucleophile in catalysis.

This sequence belongs to the pseudouridine synthase TruB family. Type 1 subfamily.

It catalyses the reaction uridine(55) in tRNA = pseudouridine(55) in tRNA. Its function is as follows. Responsible for synthesis of pseudouridine from uracil-55 in the psi GC loop of transfer RNAs. The polypeptide is tRNA pseudouridine synthase B (Mycoplasmopsis pulmonis (strain UAB CTIP) (Mycoplasma pulmonis)).